Here is a 205-residue protein sequence, read N- to C-terminus: NADH-quinone oxidoreductase subunit J (205 aa).

The next 5 helical transmembrane spans lie at 1–21 (MPIF…CVVL), 26–46 (VYSV…MILL), 54–74 (LLIV…IMML), 89–109 (LSLS…TVIL), and 142–162 (FMLP…SCIT).

It belongs to the complex I subunit 6 family.

It is found in the cell membrane. It catalyses the reaction a quinone + NADH + 5 H(+)(in) = a quinol + NAD(+) + 4 H(+)(out). Functionally, NDH-1 shuttles electrons from NADH, via FMN and iron-sulfur (Fe-S) centers, to quinones in the respiratory chain. Couples the redox reaction to proton translocation (for every two electrons transferred, four hydrogen ions are translocated across the cytoplasmic membrane), and thus conserves the redox energy in a proton gradient. The sequence is that of NADH-quinone oxidoreductase subunit J (nuoJ) from Rickettsia typhi (strain ATCC VR-144 / Wilmington).